The following is a 900-amino-acid chain: Phosphoenolpyruvate carboxylase (900 aa).

Residues H140 and K568 contribute to the active site.

The protein belongs to the PEPCase type 1 family. It depends on Mg(2+) as a cofactor.

The enzyme catalyses oxaloacetate + phosphate = phosphoenolpyruvate + hydrogencarbonate. Functionally, forms oxaloacetate, a four-carbon dicarboxylic acid source for the tricarboxylic acid cycle. The sequence is that of Phosphoenolpyruvate carboxylase from Neisseria meningitidis serogroup C / serotype 2a (strain ATCC 700532 / DSM 15464 / FAM18).